A 446-amino-acid polypeptide reads, in one-letter code: tRNA-2-methylthio-N(6)-dimethylallyladenosine synthase (446 aa).

Positions lysine 3 to arginine 124 constitute an MTTase N-terminal domain. Cysteine 12, cysteine 48, cysteine 87, cysteine 162, cysteine 166, and cysteine 169 together coordinate [4Fe-4S] cluster. The 233-residue stretch at tyrosine 148–alanine 380 folds into the Radical SAM core domain. Residues glutamate 383–threonine 446 form the TRAM domain.

This sequence belongs to the methylthiotransferase family. MiaB subfamily. As to quaternary structure, monomer. Requires [4Fe-4S] cluster as cofactor.

Its subcellular location is the cytoplasm. It carries out the reaction N(6)-dimethylallyladenosine(37) in tRNA + (sulfur carrier)-SH + AH2 + 2 S-adenosyl-L-methionine = 2-methylsulfanyl-N(6)-dimethylallyladenosine(37) in tRNA + (sulfur carrier)-H + 5'-deoxyadenosine + L-methionine + A + S-adenosyl-L-homocysteine + 2 H(+). In terms of biological role, catalyzes the methylthiolation of N6-(dimethylallyl)adenosine (i(6)A), leading to the formation of 2-methylthio-N6-(dimethylallyl)adenosine (ms(2)i(6)A) at position 37 in tRNAs that read codons beginning with uridine. This chain is tRNA-2-methylthio-N(6)-dimethylallyladenosine synthase, found in Rickettsia canadensis (strain McKiel).